The sequence spans 436 residues: UPF0597 protein YhaM (436 aa).

This sequence belongs to the UPF0597 family.

The polypeptide is UPF0597 protein YhaM (Escherichia coli O139:H28 (strain E24377A / ETEC)).